Here is a 381-residue protein sequence, read N- to C-terminus: 4-hydroxy-3-methylbut-2-en-1-yl diphosphate synthase (flavodoxin) (381 aa).

Residues cysteine 280, cysteine 283, cysteine 315, and glutamate 322 each contribute to the [4Fe-4S] cluster site.

This sequence belongs to the IspG family. The cofactor is [4Fe-4S] cluster.

The catalysed reaction is (2E)-4-hydroxy-3-methylbut-2-enyl diphosphate + oxidized [flavodoxin] + H2O + 2 H(+) = 2-C-methyl-D-erythritol 2,4-cyclic diphosphate + reduced [flavodoxin]. Its pathway is isoprenoid biosynthesis; isopentenyl diphosphate biosynthesis via DXP pathway; isopentenyl diphosphate from 1-deoxy-D-xylulose 5-phosphate: step 5/6. Functionally, converts 2C-methyl-D-erythritol 2,4-cyclodiphosphate (ME-2,4cPP) into 1-hydroxy-2-methyl-2-(E)-butenyl 4-diphosphate. This chain is 4-hydroxy-3-methylbut-2-en-1-yl diphosphate synthase (flavodoxin), found in Clavibacter sepedonicus (Clavibacter michiganensis subsp. sepedonicus).